Consider the following 690-residue polypeptide: Methionine--tRNA ligase (690 aa).

The 'HIGH' region motif lies at 20–30 (PYANGSIHLGH). Residues C151, C154, C164, and C167 each contribute to the Zn(2+) site. Residues 337–341 (KMSKS) carry the 'KMSKS' region motif. Residue K340 coordinates ATP. The tRNA-binding domain maps to 589-690 (DFAKVDLRIA…EGAQPGMRVM (102 aa)).

It belongs to the class-I aminoacyl-tRNA synthetase family. MetG type 1 subfamily. In terms of assembly, homodimer. Zn(2+) is required as a cofactor.

It is found in the cytoplasm. It carries out the reaction tRNA(Met) + L-methionine + ATP = L-methionyl-tRNA(Met) + AMP + diphosphate. Its function is as follows. Is required not only for elongation of protein synthesis but also for the initiation of all mRNA translation through initiator tRNA(fMet) aminoacylation. This is Methionine--tRNA ligase from Vibrio vulnificus (strain YJ016).